Consider the following 391-residue polypeptide: uncharacterized protein (391 aa).

Residues 235–330 enclose the HTH arsR-type domain; it reads VFILSRINLL…LYLKNETQKS (96 aa).

This is an uncharacterized protein from Methanocaldococcus jannaschii (strain ATCC 43067 / DSM 2661 / JAL-1 / JCM 10045 / NBRC 100440) (Methanococcus jannaschii).